The primary structure comprises 380 residues: E3 ubiquitin-protein ligase RNF13 (380 aa).

The N-terminal stretch at 1-34 (MLLSIGMLMLSATQVYTILTVQLFAFLNLLPVEA) is a signal peptide. Over 35–182 (DILAYNFENA…VPEFSLPLEY (148 aa)) the chain is Lumenal. The 96-residue stretch at 65 to 160 (KGFLINSKPE…GESSANSLKD (96 aa)) folds into the PA domain. The N-linked (GlcNAc...) asparagine glycan is linked to Asn-88. Residues 183–203 (YLIPFLIIVGICLILIVIFMI) traverse the membrane as a helical segment. Residues 204–380 (TKFVQDRHRA…ERDYNIANTV (177 aa)) are Cytoplasmic-facing. The RING-type; atypical zinc finger occupies 240–282 (CAICLDEYEDGDKLRILPCSHAYHCKCVDPWLTKTKKTCPVCK). A disordered region spans residues 285–380 (VVPSQGDSDS…ERDYNIANTV (96 aa)). Acidic residues-rich tracts occupy residues 292-304 (SDSD…EENE) and 339-356 (SDYE…AENE).

Interacts with ERN1. Autoubiquitinated.

The protein resides in the endoplasmic reticulum membrane. It localises to the late endosome membrane. The protein localises to the lysosome membrane. It is found in the nucleus inner membrane. The enzyme catalyses S-ubiquitinyl-[E2 ubiquitin-conjugating enzyme]-L-cysteine + [acceptor protein]-L-lysine = [E2 ubiquitin-conjugating enzyme]-L-cysteine + N(6)-ubiquitinyl-[acceptor protein]-L-lysine.. Its pathway is protein modification; protein ubiquitination. E3 ubiquitin-protein ligase that regulates cell proliferation. Involved in apoptosis regulation. Mediates ER stress-induced activation of JNK signaling pathway and apoptosis by promoting ERN1 activation and splicing of XBP1 mRNA. Also involved in protein trafficking and localization. This chain is E3 ubiquitin-protein ligase RNF13 (RNF13), found in Bos taurus (Bovine).